The chain runs to 700 residues: Methionine--tRNA ligase (700 aa).

A 'HIGH' region motif is present at residues 12-22 (PYANGNFHIGH). 4 residues coordinate Zn(2+): Cys143, Cys146, Cys156, and Cys159. A 'KMSKS' region motif is present at residues 348-352 (KMSKS). Lys351 provides a ligand contact to ATP. The region spanning 594–700 (DFSKIDLRIA…AGAQPGMRVH (107 aa)) is the tRNA-binding domain.

The protein belongs to the class-I aminoacyl-tRNA synthetase family. MetG type 1 subfamily. Homodimer. Zn(2+) is required as a cofactor.

It is found in the cytoplasm. It carries out the reaction tRNA(Met) + L-methionine + ATP = L-methionyl-tRNA(Met) + AMP + diphosphate. Its function is as follows. Is required not only for elongation of protein synthesis but also for the initiation of all mRNA translation through initiator tRNA(fMet) aminoacylation. The polypeptide is Methionine--tRNA ligase (Albidiferax ferrireducens (strain ATCC BAA-621 / DSM 15236 / T118) (Rhodoferax ferrireducens)).